A 503-amino-acid chain; its full sequence is Probable cytochrome P450 303a1 (503 aa).

Cys448 serves as a coordination point for heme.

Belongs to the cytochrome P450 family. The cofactor is heme.

The protein resides in the endoplasmic reticulum membrane. Its subcellular location is the microsome membrane. Its function is as follows. May be involved in the metabolism of insect hormones and in the breakdown of synthetic insecticides. In Drosophila melanogaster (Fruit fly), this protein is Probable cytochrome P450 303a1 (Cyp303a1).